A 394-amino-acid chain; its full sequence is Protein TsgA homolog (394 aa).

12 helical membrane passes run 11–31 (WISY…GMVM), 51–71 (FLNA…EIIP), 76–96 (LVFG…GHNL), 101–121 (ISMF…TFLI), 134–154 (LLFT…AAAI), 162–182 (WYWV…LTLC), 206–226 (MGVL…LGFI), 246–266 (QLVS…SFIL), 274–294 (IVTV…STNN), 302–322 (ILAL…LGSL), 334–354 (FILT…GPIV), and 363–383 (LATA…LGFF).

This sequence belongs to the major facilitator superfamily. TsgA family.

It localises to the cell inner membrane. In Yersinia enterocolitica serotype O:8 / biotype 1B (strain NCTC 13174 / 8081), this protein is Protein TsgA homolog.